A 1356-amino-acid chain; its full sequence is Vegetative incompatibility protein HET-E-1 (1356 aa).

Residues 294 to 629 form the NACHT domain; it reads RLLWINGDPG…DFLLGTASDK (336 aa). Residue 300-307 participates in GTP binding; the sequence is GDPGKGKT. 10 WD repeats span residues 839–869, 881–911, 923–953, 965–995, 1007–1037, 1049–1079, 1091–1121, 1133–1163, 1175–1205, and 1217–1247; these read GHGSSVLSVAFSADGQRVASGSDDKTIKIWD, GHGGSVWSVAFSPDRERVASGSDDKTIKIWD, GHGGRVQSVAFSPDGQRVASGSDDHTIKIWD, GHGSSVLSVAFSPDGQRVASGSGDKTIKIWD, GHGGSVWSVAFSPDGQRVASGSDDKTIKIWD, GHGGWVQSVVFSPDGQRVASGSDDHTIKIWD, GHGDSVWSVAFSPDGQRVASGSIDGTIKIWD, GHGGWVHSVAFSPDGQRVASGSIDGTIKIWD, GHGGWVQSVAFSPDGQRVASGSSDKTIKIWD, and GHGGWVQSVAFSPDGQRVASGSSDNTIKIWD.

Its function is as follows. Responsible for vegetative incompatibility through specific interactions with different alleles of the unlinked gene, het-c. The polypeptide is Vegetative incompatibility protein HET-E-1 (HET-E1) (Podospora anserina (Pleurage anserina)).